A 269-amino-acid polypeptide reads, in one-letter code: Energy-coupling factor transporter ATP-binding protein EcfA1 (269 aa).

An ABC transporter domain is found at 8 to 242; the sequence is IVFKNVSFQY…AEELTRIGLD (235 aa). 42–49 contributes to the ATP binding site; sequence GHNGSGKS.

The protein belongs to the ABC transporter superfamily. Energy-coupling factor EcfA family. Forms a stable energy-coupling factor (ECF) transporter complex composed of 2 membrane-embedded substrate-binding proteins (S component), 2 ATP-binding proteins (A component) and 2 transmembrane proteins (T component).

The protein localises to the cell membrane. Its function is as follows. ATP-binding (A) component of a common energy-coupling factor (ECF) ABC-transporter complex. Unlike classic ABC transporters this ECF transporter provides the energy necessary to transport a number of different substrates. The polypeptide is Energy-coupling factor transporter ATP-binding protein EcfA1 (Staphylococcus aureus (strain Mu50 / ATCC 700699)).